The following is a 482-amino-acid chain: Iroquois-class homeodomain protein irx-5 (482 aa).

The homeobox DNA-binding region spans 109 to 171; that stretch reads DPAYRKNATR…NARRRLKKEN (63 aa). Disordered stretches follow at residues 173–307 and 462–482; these read MTWT…HQSH and QSQA…MSSI. A compositionally biased stretch (acidic residues) spans 182–198; the sequence is EDEEDDENIDLEKNEED. Residues 199–256 show a composition bias toward basic and acidic residues; sequence DPRKLEEKGDQDGDAGDQKRSPSAVDFDRLEGEVRQGKELDQTRSDSEQNEVEERNDL. The span at 264–273 shows a compositional bias: pro residues; the sequence is PTSPLCPPDQ. The segment covering 284–305 has biased composition (basic residues); it reads HRHTVHNHHHQSIQQLHHHSHQ. Residues 467–482 show a composition bias toward basic and acidic residues; that stretch reads LNKDTPYEMKKGMSSI.

Belongs to the TALE/IRO homeobox family. As to expression, expressed in the neural plate in overlapping patterns with other irx members, which all share an anterior border of expression. Broadly expressed in the tailbud rhombencephalon (hindbrain). Outside the nervous system and at tailbud stages, expressed in the developing otic vesicle and branchial arches.

It localises to the nucleus. Acts partially redundantly with other irx members in neural patterning. Required for formation of the posterior forebrain, midbrain, hindbrain, and to a lesser extent, spinal cord. Patterns the neuroectoderm in both the anterior/posterior and dorsal/ventral axes. Does not appear to play a role in pronephros kidney development. Involved in craniofacial and gonadal development. Modulates the migration of progenitor cell populations in branchial arches and gonads by repressing CXCL12. The chain is Iroquois-class homeodomain protein irx-5 from Xenopus tropicalis (Western clawed frog).